Reading from the N-terminus, the 634-residue chain is tRNA uridine 5-carboxymethylaminomethyl modification enzyme MnmG (634 aa).

14–19 (GGGHAG) contacts FAD. 279–293 (GPRYCPSIEDKVVRF) provides a ligand contact to NAD(+).

Belongs to the MnmG family. In terms of assembly, homodimer. Heterotetramer of two MnmE and two MnmG subunits. FAD serves as cofactor.

It is found in the cytoplasm. Functionally, NAD-binding protein involved in the addition of a carboxymethylaminomethyl (cmnm) group at the wobble position (U34) of certain tRNAs, forming tRNA-cmnm(5)s(2)U34. This chain is tRNA uridine 5-carboxymethylaminomethyl modification enzyme MnmG, found in Xanthomonas axonopodis pv. citri (strain 306).